The chain runs to 195 residues: Probable molybdenum cofactor guanylyltransferase (195 aa).

Residues 9–11 (LAG), Lys21, Asp69, and Asp100 each bind GTP. A Mg(2+)-binding site is contributed by Asp100.

The protein belongs to the MobA family. The cofactor is Mg(2+).

The protein localises to the cytoplasm. It carries out the reaction Mo-molybdopterin + GTP + H(+) = Mo-molybdopterin guanine dinucleotide + diphosphate. In terms of biological role, transfers a GMP moiety from GTP to Mo-molybdopterin (Mo-MPT) cofactor (Moco or molybdenum cofactor) to form Mo-molybdopterin guanine dinucleotide (Mo-MGD) cofactor. In Geobacillus sp. (strain WCH70), this protein is Probable molybdenum cofactor guanylyltransferase.